The primary structure comprises 372 residues: N-acetylneuraminate epimerase 1 (372 aa).

The first 25 residues, 1–25 (MITMKVKNFIYLPFCLFIGTSVAGA), serve as a signal peptide directing secretion. Kelch repeat units follow at residues 44-88 (KIYI…TIID), 90-141 (KIYV…FIHN), 143-177 (HAVS…KVNR), 178-223 (DYFS…IFAE), 226-269 (IYIL…VSGA), 291-340 (EKYS…PWQG), and 342-371 (MLIL…IKIV). E232 acts as the Proton acceptor in catalysis.

The protein belongs to the NanM family. As to quaternary structure, homodimer.

It is found in the periplasm. It catalyses the reaction N-acetyl-alpha-neuraminate = N-acetyl-beta-neuraminate. In terms of biological role, converts alpha-N-acetylneuranimic acid (Neu5Ac) to the beta-anomer, accelerating the equilibrium between the alpha- and beta-anomers. Probably facilitates sialidase-negative bacteria to compete successfully for limited amounts of extracellular Neu5Ac, which is likely taken up in the beta-anomer. In addition, the rapid removal of sialic acid from solution might be advantageous to the bacterium to damp down host responses. In Escherichia coli O6:H1 (strain CFT073 / ATCC 700928 / UPEC), this protein is N-acetylneuraminate epimerase 1.